The primary structure comprises 609 residues: Hemagglutinin glycoprotein (609 aa).

Residues 1 to 34 (MSPPRDRVDAYYKDNFQFKNTRVVLNKEQLLIER) are Intravirion-facing. A helical; Signal-anchor for type II membrane protein transmembrane segment spans residues 35–58 (PCMLLTVLFVMFLSLVGLLAIAGI). Over 59–609 (RLHRAAVNTA…VGIKITCNGK (551 aa)) the chain is Virion surface. 5 N-linked (GlcNAc...) asparagine; by host glycosylation sites follow: Asn-168, Asn-187, Asn-200, Asn-215, and Asn-395.

It belongs to the paramyxoviruses hemagglutinin-neuraminidase family. Non-sialidase subfamily.

The protein resides in the virion membrane. It localises to the host membrane. Attaches the virus to cell receptors and thereby initiating infection. Binding of H protein to the receptor induces a conformational change that allows the F protein to trigger virion/cell membranes fusion. Down-regulates human MCP/CD46 cell surface expression. The chain is Hemagglutinin glycoprotein (H) from Bos indicus (Zebu).